Reading from the N-terminus, the 213-residue chain is DNA-directed RNA polymerase subunit alpha (213 aa).

It belongs to the RNA polymerase alpha chain family. As to quaternary structure, in plastids the minimal PEP RNA polymerase catalytic core is composed of four subunits: alpha, beta, beta', and beta''. When a (nuclear-encoded) sigma factor is associated with the core the holoenzyme is formed, which can initiate transcription.

It is found in the plastid. Its subcellular location is the chloroplast. It catalyses the reaction RNA(n) + a ribonucleoside 5'-triphosphate = RNA(n+1) + diphosphate. DNA-dependent RNA polymerase catalyzes the transcription of DNA into RNA using the four ribonucleoside triphosphates as substrates. In Euglena stellata, this protein is DNA-directed RNA polymerase subunit alpha (rpoA).